Reading from the N-terminus, the 522-residue chain is ARS-binding protein 1 (522 aa).

Residues 70 to 144 enclose the HTH CENPB-type domain; it reads DVKRNRPPKY…RKRHILHAIN (75 aa). A Phosphothreonine modification is found at threonine 460.

In terms of assembly, interacts with mcm10.

Its subcellular location is the nucleus. Binds, preferentially, to the Maundrell ARS consensus sequence within ARS3002. In Schizosaccharomyces pombe (strain 972 / ATCC 24843) (Fission yeast), this protein is ARS-binding protein 1 (abp1).